The sequence spans 73 residues: Mu-conotoxin SIIIA (73 aa).

The N-terminal stretch at 1–20 (MMSKLGVLLTVCPLLFPLTA) is a signal peptide. Residues 20 to 40 (ALPPDGDQPADRPAERMQDDI) are disordered. A propeptide spanning residues 21–49 (LPPDGDQPADRPAERMQDDISSDEHPLFD) is cleaved from the precursor. Positions 28-40 (PADRPAERMQDDI) are enriched in basic and acidic residues. Pyrrolidone carboxylic acid is present on glutamine 52. 3 disulfides stabilise this stretch: cysteine 54-cysteine 64, cysteine 55-cysteine 70, and cysteine 59-cysteine 71. Position 71 is a cysteine amide (cysteine 71).

The protein belongs to the conotoxin M superfamily. Expressed by the venom duct.

It localises to the secreted. Its function is as follows. Mu-conotoxins block voltage-gated sodium channels (Nav). This toxin moderately blocks rNav1.1/SCN1A, rNav1.2/SCN2A, rNav1.3/SCN3A, rNav1.4/SCN4A, and mNav1.6/SCN8A. The protein is Mu-conotoxin SIIIA of Conus striatus (Striated cone).